We begin with the raw amino-acid sequence, 213 residues long: Probable nicotinate-nucleotide adenylyltransferase (213 aa).

It belongs to the NadD family.

The enzyme catalyses nicotinate beta-D-ribonucleotide + ATP + H(+) = deamido-NAD(+) + diphosphate. The protein operates within cofactor biosynthesis; NAD(+) biosynthesis; deamido-NAD(+) from nicotinate D-ribonucleotide: step 1/1. In terms of biological role, catalyzes the reversible adenylation of nicotinate mononucleotide (NaMN) to nicotinic acid adenine dinucleotide (NaAD). This Ruegeria pomeroyi (strain ATCC 700808 / DSM 15171 / DSS-3) (Silicibacter pomeroyi) protein is Probable nicotinate-nucleotide adenylyltransferase.